Consider the following 616-residue polypeptide: UvrABC system protein C (616 aa).

One can recognise a GIY-YIG domain in the interval 11-85; the sequence is ASPGVYIFRR…IKQHRPHYNV (75 aa). The region spanning 194–229 is the UVR domain; that stretch reads APVIARLKADMQAAARAQDFEQAARLRDRVQAVEKL.

The protein belongs to the UvrC family. As to quaternary structure, interacts with UvrB in an incision complex.

The protein resides in the cytoplasm. In terms of biological role, the UvrABC repair system catalyzes the recognition and processing of DNA lesions. UvrC both incises the 5' and 3' sides of the lesion. The N-terminal half is responsible for the 3' incision and the C-terminal half is responsible for the 5' incision. The chain is UvrABC system protein C from Deinococcus geothermalis (strain DSM 11300 / CIP 105573 / AG-3a).